Here is a 315-residue protein sequence, read N- to C-terminus: Adenine deaminase (315 aa).

The Zn(2+) site is built by histidine 14, histidine 16, and histidine 194. The Proton donor role is filled by glutamate 197. Aspartate 275 is a binding site for Zn(2+). Position 276 (aspartate 276) interacts with substrate.

The protein belongs to the metallo-dependent hydrolases superfamily. Adenosine and AMP deaminases family. Adenine deaminase type 2 subfamily. Zn(2+) serves as cofactor.

The catalysed reaction is adenine + H2O + H(+) = hypoxanthine + NH4(+). Its function is as follows. Catalyzes the hydrolytic deamination of adenine to hypoxanthine. Plays an important role in the purine salvage pathway and in nitrogen catabolism. The polypeptide is Adenine deaminase (Ectopseudomonas mendocina (strain ymp) (Pseudomonas mendocina)).